The primary structure comprises 399 residues: Tryptophan synthase beta chain (399 aa).

Lys92 is subject to N6-(pyridoxal phosphate)lysine.

The protein belongs to the TrpB family. In terms of assembly, tetramer of two alpha and two beta chains. The cofactor is pyridoxal 5'-phosphate.

The catalysed reaction is (1S,2R)-1-C-(indol-3-yl)glycerol 3-phosphate + L-serine = D-glyceraldehyde 3-phosphate + L-tryptophan + H2O. Its pathway is amino-acid biosynthesis; L-tryptophan biosynthesis; L-tryptophan from chorismate: step 5/5. Functionally, the beta subunit is responsible for the synthesis of L-tryptophan from indole and L-serine. The sequence is that of Tryptophan synthase beta chain from Thiobacillus denitrificans (strain ATCC 25259 / T1).